A 72-amino-acid polypeptide reads, in one-letter code: MWIPWQDLSPVTLENLIESFVLREGTDYGEHERTLEQKVADVKRQLQCGEAVLVCSELHETVNIMPRSQFRE.

Belongs to the UPF0270 family.

This Shigella flexneri serotype 5b (strain 8401) protein is UPF0270 protein YheU.